The following is a 146-amino-acid chain: Hemoglobin subunit beta (146 aa).

Valine 1 carries the N-acetylvaline modification. The Globin domain maps to histidine 2–histidine 146. Position 44 is a phosphoserine (serine 44). Lysine 59 bears the N6-acetyllysine mark. Residue histidine 63 coordinates heme b. Lysine 82 carries the N6-acetyllysine modification. Heme b is bound at residue histidine 92. Cysteine 93 carries the S-nitrosocysteine modification. Lysine 144 carries the post-translational modification N6-acetyllysine.

Belongs to the globin family. In terms of assembly, heterotetramer of two alpha chains and two beta chains. As to expression, red blood cells.

Its function is as follows. Involved in oxygen transport from the lung to the various peripheral tissues. The sequence is that of Hemoglobin subunit beta (HBB) from Myotis velifer (Mouse-eared bat).